Here is a 363-residue protein sequence, read N- to C-terminus: Phosphoserine aminotransferase (363 aa).

R42 lines the L-glutamate pocket. Pyridoxal 5'-phosphate-binding residues include W105, T155, D175, and Q198. K199 carries the post-translational modification N6-(pyridoxal phosphate)lysine. A pyridoxal 5'-phosphate-binding site is contributed by 240–241 (NT).

It belongs to the class-V pyridoxal-phosphate-dependent aminotransferase family. SerC subfamily. In terms of assembly, homodimer. Pyridoxal 5'-phosphate serves as cofactor.

It is found in the cytoplasm. The enzyme catalyses O-phospho-L-serine + 2-oxoglutarate = 3-phosphooxypyruvate + L-glutamate. It catalyses the reaction 4-(phosphooxy)-L-threonine + 2-oxoglutarate = (R)-3-hydroxy-2-oxo-4-phosphooxybutanoate + L-glutamate. The protein operates within amino-acid biosynthesis; L-serine biosynthesis; L-serine from 3-phospho-D-glycerate: step 2/3. Its pathway is cofactor biosynthesis; pyridoxine 5'-phosphate biosynthesis; pyridoxine 5'-phosphate from D-erythrose 4-phosphate: step 3/5. Functionally, catalyzes the reversible conversion of 3-phosphohydroxypyruvate to phosphoserine and of 3-hydroxy-2-oxo-4-phosphonooxybutanoate to phosphohydroxythreonine. This Janthinobacterium sp. (strain Marseille) (Minibacterium massiliensis) protein is Phosphoserine aminotransferase.